Here is a 431-residue protein sequence, read N- to C-terminus: Ribosomal RNA small subunit methyltransferase B (431 aa).

S-adenosyl-L-methionine-binding positions include 254–260, Asp277, Asp303, and Asp322; that span reads CAAPGGK. The active-site Nucleophile is the Cys375. The tract at residues 398–417 is disordered; sequence LHATGTPASPGQQNLPGPEE. The segment covering 403–412 has biased composition (polar residues); that stretch reads TPASPGQQNL.

Belongs to the class I-like SAM-binding methyltransferase superfamily. RsmB/NOP family.

The protein localises to the cytoplasm. The enzyme catalyses cytidine(967) in 16S rRNA + S-adenosyl-L-methionine = 5-methylcytidine(967) in 16S rRNA + S-adenosyl-L-homocysteine + H(+). Its function is as follows. Specifically methylates the cytosine at position 967 (m5C967) of 16S rRNA. The sequence is that of Ribosomal RNA small subunit methyltransferase B from Klebsiella pneumoniae (strain 342).